The sequence spans 517 residues: Aspartyl/glutamyl-tRNA(Asn/Gln) amidotransferase subunit B (517 aa).

Belongs to the GatB/GatE family. GatB subfamily. Heterotrimer of A, B and C subunits.

It carries out the reaction L-glutamyl-tRNA(Gln) + L-glutamine + ATP + H2O = L-glutaminyl-tRNA(Gln) + L-glutamate + ADP + phosphate + H(+). It catalyses the reaction L-aspartyl-tRNA(Asn) + L-glutamine + ATP + H2O = L-asparaginyl-tRNA(Asn) + L-glutamate + ADP + phosphate + 2 H(+). In terms of biological role, allows the formation of correctly charged Asn-tRNA(Asn) or Gln-tRNA(Gln) through the transamidation of misacylated Asp-tRNA(Asn) or Glu-tRNA(Gln) in organisms which lack either or both of asparaginyl-tRNA or glutaminyl-tRNA synthetases. The reaction takes place in the presence of glutamine and ATP through an activated phospho-Asp-tRNA(Asn) or phospho-Glu-tRNA(Gln). The protein is Aspartyl/glutamyl-tRNA(Asn/Gln) amidotransferase subunit B of Thermobifida fusca (strain YX).